The sequence spans 510 residues: Secreted RxLR effector protein 24 (510 aa).

The signal sequence occupies residues 1–18 (MRGAFYVAIALLGSHTAA). The short motif at 47 to 68 (RVLRERRDSKDKLTVHAGAEER) is the RxLR-dEER element.

It belongs to the RxLR effector family.

The protein localises to the secreted. Its subcellular location is the host nucleus. Secreted effector that acts as an elicitor that induces cell death in host plant cells. The polypeptide is Secreted RxLR effector protein 24 (Plasmopara viticola (Downy mildew of grapevine)).